The sequence spans 160 residues: Ribosome maturation factor RimP (160 aa).

This sequence belongs to the RimP family.

Its subcellular location is the cytoplasm. Functionally, required for maturation of 30S ribosomal subunits. The sequence is that of Ribosome maturation factor RimP from Citrifermentans bemidjiense (strain ATCC BAA-1014 / DSM 16622 / JCM 12645 / Bem) (Geobacter bemidjiensis).